Consider the following 545-residue polypeptide: CTP synthase (545 aa).

Residues 1-266 (MTTNYIFVTG…DDYICKRFSL (266 aa)) are amidoligase domain. S14 contributes to the CTP binding site. A UTP-binding site is contributed by S14. ATP-binding positions include 15 to 20 (SLGKGI) and D72. Residues D72 and E140 each contribute to the Mg(2+) site. CTP contacts are provided by residues 147–149 (DIE), 187–192 (KTKPTQ), and K223. UTP contacts are provided by residues 187–192 (KTKPTQ) and K223. 239–241 (KDV) is an ATP binding site. Positions 291 to 542 (TIGMVGKYIE…VKAASEYQKR (252 aa)) constitute a Glutamine amidotransferase type-1 domain. Position 352 (G352) interacts with L-glutamine. The Nucleophile; for glutamine hydrolysis role is filled by C379. L-glutamine-binding positions include 380-383 (LGMQ), E403, and R470. Residues H515 and E517 contribute to the active site.

This sequence belongs to the CTP synthase family. In terms of assembly, homotetramer.

It catalyses the reaction UTP + L-glutamine + ATP + H2O = CTP + L-glutamate + ADP + phosphate + 2 H(+). It carries out the reaction L-glutamine + H2O = L-glutamate + NH4(+). The enzyme catalyses UTP + NH4(+) + ATP = CTP + ADP + phosphate + 2 H(+). It participates in pyrimidine metabolism; CTP biosynthesis via de novo pathway; CTP from UDP: step 2/2. With respect to regulation, allosterically activated by GTP, when glutamine is the substrate; GTP has no effect on the reaction when ammonia is the substrate. The allosteric effector GTP functions by stabilizing the protein conformation that binds the tetrahedral intermediate(s) formed during glutamine hydrolysis. Inhibited by the product CTP, via allosteric rather than competitive inhibition. Functionally, catalyzes the ATP-dependent amination of UTP to CTP with either L-glutamine or ammonia as the source of nitrogen. Regulates intracellular CTP levels through interactions with the four ribonucleotide triphosphates. The sequence is that of CTP synthase from Enterobacter sp. (strain 638).